The chain runs to 322 residues: Dioxygenase himG (322 aa).

Residues histidine 148 and histidine 229 each coordinate Fe cation.

This sequence belongs to the PhyH family. Homodimer. Fe cation is required as a cofactor.

Its pathway is secondary metabolite biosynthesis. Polyketide synthase-nonribosomal peptide synthetase; part of the him gene cluster that mediates the biosynthesis of himeic acid A, a ubiquitin-activating enzyme (E1) inhibitor. First, himA, together with the trans-enoyl reductase himH, catalyzes the formation of apolyketide chain, which is then condensed with leucine by the NRPS activity of himA. Dieckmann cyclization and release from himA gives a tetramic acid intermediate as the product of himA PKS-NRPS. HimG then catalyzes alpha-oxidation of the tetramic acid ring, with a subsequent rearrangement to yield apyrone intermediate. Two terminal methyl groups of polyketide and amide side chains are oxidized to carboxylic acids by himC cytochrome P450 monooxygenase to form himeic acid A. Himeic acid A is further converted to himeic acid B and C during culture growth. No gene responsible for pyrone to pyridone conversion was found in the him gene cluster and himeic acid A is non-enzymatically converted to himeic acid C by the incorporation of an ammonium nitrogen atom in a pH5 buffer, and to himeic acid B at a conversion ratio of 50% during incubation in MeOH for 5 days. This is Dioxygenase himG from Aspergillus japonicus.